We begin with the raw amino-acid sequence, 197 residues long: MDQPWNANIHYDALLDAMVPLGTQCVLDVGCGDGLLAARLARRIPYVTAVDIDAPVLRRAQTRFANAPIRWLHADIMTAELPNAGFDAVVSNAALHHIEDTRTALSRLGGLVTPGGTLAVVTFVTPSLRNGLWHLTSWVACGMANRVKGKWEHSAPIKWPPPQTLHELRSHVRALLPGACIRRLLYGRVLVTWRAPV.

It belongs to the methyltransferase superfamily.

This is an uncharacterized protein from Mycobacterium bovis (strain ATCC BAA-935 / AF2122/97).